A 249-amino-acid polypeptide reads, in one-letter code: Coproheme decarboxylase (249 aa).

The active site involves Tyr145. Fe-coproporphyrin III is bound by residues 145-149 and His172; that span reads YPMAR.

The protein belongs to the ChdC family. Type 1 subfamily. It depends on Fe-coproporphyrin III as a cofactor.

It carries out the reaction Fe-coproporphyrin III + 2 H2O2 + 2 H(+) = heme b + 2 CO2 + 4 H2O. The catalysed reaction is Fe-coproporphyrin III + H2O2 + H(+) = harderoheme III + CO2 + 2 H2O. It catalyses the reaction harderoheme III + H2O2 + H(+) = heme b + CO2 + 2 H2O. The protein operates within porphyrin-containing compound metabolism; protoheme biosynthesis. Involved in coproporphyrin-dependent heme b biosynthesis. Catalyzes the decarboxylation of Fe-coproporphyrin III (coproheme) to heme b (protoheme IX), the last step of the pathway. The reaction occurs in a stepwise manner with a three-propionate intermediate. This is Coproheme decarboxylase from Oceanobacillus iheyensis (strain DSM 14371 / CIP 107618 / JCM 11309 / KCTC 3954 / HTE831).